We begin with the raw amino-acid sequence, 120 residues long: Large ribosomal subunit protein uL24 (120 aa).

A disordered region spans residues Met-1–Ala-26. Residues Lys-10–Val-24 are compositionally biased toward basic residues.

This sequence belongs to the universal ribosomal protein uL24 family. In terms of assembly, part of the 50S ribosomal subunit. Interacts weakly with protein L4.

Its function is as follows. One of two assembly initiator proteins, it binds directly to the 5'-end of the 23S rRNA, where it nucleates assembly of the 50S subunit. Stabilizes the tertiary rRNA structure within the 23S rRNA domain (domain I) to which it binds. Located at the polypeptide exit tunnel on the outside of the subunit. The polypeptide is Large ribosomal subunit protein uL24 (rpl24) (Haloarcula marismortui (strain ATCC 43049 / DSM 3752 / JCM 8966 / VKM B-1809) (Halobacterium marismortui)).